The sequence spans 56 residues: Small ribosomal subunit protein uS14 (56 aa).

4 residues coordinate Zn(2+): cysteine 21, cysteine 24, cysteine 39, and cysteine 42.

It belongs to the universal ribosomal protein uS14 family. Component of the small ribosomal subunit (SSU). Mature N.crassa ribosomes consist of a small (40S) and a large (60S) subunit. The 40S small subunit contains 1 molecule of ribosomal RNA (18S rRNA) and at least 32 different proteins. The large 60S subunit contains 3 rRNA molecules (26S, 5.8S and 5S rRNA) and at least 42 different proteins. Zn(2+) is required as a cofactor.

It is found in the cytoplasm. Component of the ribosome, a large ribonucleoprotein complex responsible for the synthesis of proteins in the cell. The small ribosomal subunit (SSU) binds messenger RNAs (mRNAs) and translates the encoded message by selecting cognate aminoacyl-transfer RNA (tRNA) molecules. The large subunit (LSU) contains the ribosomal catalytic site termed the peptidyl transferase center (PTC), which catalyzes the formation of peptide bonds, thereby polymerizing the amino acids delivered by tRNAs into a polypeptide chain. The nascent polypeptides leave the ribosome through a tunnel in the LSU and interact with protein factors that function in enzymatic processing, targeting, and the membrane insertion of nascent chains at the exit of the ribosomal tunnel. This is Small ribosomal subunit protein uS14 (rps-29) from Neurospora crassa (strain ATCC 24698 / 74-OR23-1A / CBS 708.71 / DSM 1257 / FGSC 987).